A 394-amino-acid chain; its full sequence is MKKLLKSVLVFAALSSASSLQALPVGNPAEPSLMIDGILWEGFGGDPCDPCTTWVDAISMRMGYYGDFVFDRVLKTDVNKEFQMGAKPTTTTGNAVAPSTLTARENPAYGRHMQDAEMFTNAACMALNIWDRFDVFCTLGASSGYLKGNSASFNLVGLFGNNENQTKVSNGAFVPNMSLDQSVVELYTDTAFAWSVGARAALWECGCATLGASFQYAQSKPKVEELNVLCNAAEFTINKPKGYVGKELPLDLTAGTDAATGTKDASIDYHEWQASLALSYRLNMFTPYIGVKWSRASFDADTIRIAQPKSAETIFDVTTLNPTIAGAGDVKTSAEGQLGDTMQIVSLQLNKMKSRKSCGIAVGTTIVDADKYAVTVETRLIDERAAHVNAQFRF.

The first 22 residues, 1-22 (MKKLLKSVLVFAALSSASSLQA), serve as a signal peptide directing secretion.

This sequence belongs to the chlamydial porin (CP) (TC 1.B.2) family. In terms of assembly, part of a disulfide cross-linked outer membrane complex (COMC) composed of the major outer membrane porin (MOMP), the small cysteine-rich protein (OmcA) and the large cysteine-rich periplasmic protein (OmcB).

It localises to the cell outer membrane. In terms of biological role, in elementary bodies (EBs, the infectious stage, which is able to survive outside the host cell) provides the structural integrity of the outer envelope through disulfide cross-links with the small cysteine-rich protein and the large cysteine-rich periplasmic protein. It has been described in publications as the Sarkosyl-insoluble COMC (Chlamydia outer membrane complex), and serves as the functional equivalent of peptidoglycan. Its function is as follows. Permits diffusion of specific solutes through the outer membrane. The protein is Major outer membrane porin, serovar B (ompA) of Chlamydia trachomatis.